The primary structure comprises 1093 residues: Fused isobutyryl-CoA mutase (1093 aa).

Residues 1–20 are disordered; the sequence is MTDLSDVSRTAAAKPPAVPG. Residues 26 to 156 form the B12-binding domain; that stretch reads KVRFVTAASL…AGMITDMAQR (131 aa). His-39 contributes to the adenosylcob(III)alamin binding site. Residues 169–417 are GTPase chaperone MeaI; that stretch reads LDTVVAGDRR…YQGLVGALGA (249 aa). Residue 219 to 224 coordinates GTP; it reads GAGKSS. Residues Ser-223, Ile-248, Asp-249, and Asp-262 each contribute to the Mg(2+) site. Residue Arg-265 coordinates GTP. Mg(2+) contacts are provided by Glu-310 and Thr-311. 357–360 serves as a coordination point for GTP; it reads NKFD. The tract at residues 418-579 is linker; it reads RGMSLKPGTL…MRENVPGSFP (162 aa). Substrate contacts are provided by Phe-587, Arg-622, Arg-728, Tyr-772, Ser-821, Arg-856, and Lys-861. The GTP site is built by Glu-973 and Asn-1092.

Belongs to the IcmF family. As to quaternary structure, homodimer. Adenosylcob(III)alamin serves as cofactor. Requires Mg(2+) as cofactor.

It carries out the reaction 2-methylpropanoyl-CoA = butanoyl-CoA. The catalysed reaction is 3-methylbutanoyl-CoA = 2,2-dimethylpropanoyl-CoA. The enzyme catalyses GTP + H2O = GDP + phosphate + H(+). Its activity is regulated as follows. Is prone to inactivation during catalytic turnover due to the occasional loss of the 5'-deoxyadenosine moiety and formation of the inactive cob(II)alamin cofactor in its active site. The GTPase activity of IcmF powers the ejection of the inactive cofactor and requires the presence of an acceptor protein, adenosyltransferase (ATR), for receiving it. ATR, in turn, catalyzes an adenosylation reaction converting cob(II)alamin in the presence of ATP and a reductant to the active AdoCbl cofactor. The repaired cofactor is then reloaded onto IcmF in a GTPase-gated step, regenerating active enzyme. The GTPase activity of IcmF is significantly decreased in the presence of excess of AdoCbl or cob(II)alamin and is higher in the apoenzyme state, indicating that the G-domain senses the presence and identity of the cofactor in the mutase active site. Its function is as follows. Catalyzes the reversible interconversion of isobutyryl-CoA and n-butyryl-CoA, and to a much lesser extent, of pivalyl-CoA and isovaleryl-CoA, using radical chemistry. Also exhibits GTPase activity, associated with its G-protein domain (MeaI) that functions as a chaperone that assists cofactor delivery and proper holo-enzyme assembly. The G-domain of IcmF also has a role in its cofactor repair. Does not display ATPase activity. This Cupriavidus metallidurans (strain ATCC 43123 / DSM 2839 / NBRC 102507 / CH34) (Ralstonia metallidurans) protein is Fused isobutyryl-CoA mutase.